The chain runs to 300 residues: uncharacterized protein (300 aa).

Positions 1–20 (MRLLISCILILSILVNFISG) are cleaved as a signal peptide. Over 21-279 (HAVLVAPTPF…PCSIYGDGNG (259 aa)) the chain is Extracellular. Asn-56, Asn-217, and Asn-278 each carry an N-linked (GlcNAc...) asparagine glycan. The chain crosses the membrane as a helical span at residues 280–300 (SNLIIIPTLLIISILSLILMF).

It is found in the membrane. This is an uncharacterized protein from Dictyostelium discoideum (Social amoeba).